We begin with the raw amino-acid sequence, 205 residues long: Isochorismatase domain-containing protein 2 (205 aa).

Residues Ser-7 and Ser-202 each carry the phosphoserine modification.

Belongs to the isochorismatase family. As to quaternary structure, interacts with CDKN2A.

The protein resides in the cytoplasm. It is found in the nucleus. The polypeptide is Isochorismatase domain-containing protein 2 (ISOC2) (Homo sapiens (Human)).